Reading from the N-terminus, the 162-residue chain is Ribosome maturation factor RimP (162 aa).

Belongs to the RimP family.

It is found in the cytoplasm. Its function is as follows. Required for maturation of 30S ribosomal subunits. This is Ribosome maturation factor RimP from Leptospira borgpetersenii serovar Hardjo-bovis (strain JB197).